Consider the following 267-residue polypeptide: LysM and putative peptidoglycan-binding domain-containing protein 4 (267 aa).

Residues 1 to 211 are Extracellular-facing; sequence MRRGDPPPRA…RSNGADWGIQ (211 aa). The interval 30–64 is disordered; sequence HRQEEPEASSEDEELNVMELRPRSRDSSSKEKEGV. The span at 35–45 shows a compositional bias: acidic residues; that stretch reads PEASSEDEELN. Positions 49-64 are enriched in basic and acidic residues; it reads LRPRSRDSSSKEKEGV. The 45-residue stretch at 70–114 folds into the LysM domain; sequence LERDISHEDNLSKLALQYGCKVADIKRVNNLFQEQDMYALKSIKI. The N-linked (GlcNAc...) asparagine glycan is linked to Asn79. The tract at residues 130-152 is disordered; that stretch reads RTPQQRPSHDAAPSNSAMASVSG. The segment covering 142 to 152 has biased composition (polar residues); it reads PSNSAMASVSG. Residues 212–232 traverse the membrane as a helical segment; that stretch reads WWNAVIAMLLIGIVLPIFYVV. Over 233 to 267 the chain is Cytoplasmic; sequence YYKTKDSGESAVDNVGVNISVSTSNSTREYNGKSP.

The protein resides in the membrane. This is LysM and putative peptidoglycan-binding domain-containing protein 4 (lysmd4) from Danio rerio (Zebrafish).